Reading from the N-terminus, the 385-residue chain is 8-amino-7-oxononanoate synthase (385 aa).

Residue Arg-27 coordinates substrate. A pyridoxal 5'-phosphate-binding site is contributed by 105 to 106; that stretch reads GY. Position 130 (His-130) interacts with substrate. Residues Ser-176, 201–204, and 232–235 each bind pyridoxal 5'-phosphate; these read DEAH and TMSK. Lys-235 carries the N6-(pyridoxal phosphate)lysine modification. Thr-345 serves as a coordination point for substrate.

This sequence belongs to the class-II pyridoxal-phosphate-dependent aminotransferase family. BioF subfamily. In terms of assembly, homodimer. Requires pyridoxal 5'-phosphate as cofactor.

The enzyme catalyses 6-carboxyhexanoyl-[ACP] + L-alanine + H(+) = (8S)-8-amino-7-oxononanoate + holo-[ACP] + CO2. Its pathway is cofactor biosynthesis; biotin biosynthesis. Functionally, catalyzes the decarboxylative condensation of pimeloyl-[acyl-carrier protein] and L-alanine to produce 8-amino-7-oxononanoate (AON), [acyl-carrier protein], and carbon dioxide. The polypeptide is 8-amino-7-oxononanoate synthase (Mycobacterium leprae (strain Br4923)).